The sequence spans 611 residues: Inhibitor of apoptosis protein (611 aa).

BIR repeat units lie at residues 30–97 (ELYR…CSFV), 176–242 (EEAR…CPFV), and 262–329 (HEAR…CEYL). Zn(2+) is bound by residues Cys-299, Cys-302, His-319, and Cys-326. In terms of domain architecture, CARD spans 446–536 (VASDDLSLIR…VLYKDLFVEK (91 aa)). Residues 564-599 (CKVCMDKEVSIVFIPCGHLVVCKECAPSLRKCPICR) form an RING-type zinc finger.

This sequence belongs to the IAP family. As to expression, cells of the T-lymphocyte lineage. Found in both cortical and medullary cells of the thymus. Expressed at relatively high levels also in spleen, bursa, intestine and lung and at very low levels in testis, brain and skeletal muscle.

Its subcellular location is the nucleus. The protein resides in the cytoplasm. Apoptotic suppressor. In Gallus gallus (Chicken), this protein is Inhibitor of apoptosis protein (ITA).